We begin with the raw amino-acid sequence, 565 residues long: Glycine--tRNA ligase (565 aa).

Residues arginine 98 and glutamate 164 each contribute to the substrate site. Residues 196–198 (RNE), 206–211 (IRLREF), 323–324 (EI), and 440–443 (GIDR) each bind ATP. Substrate is bound at residue 211-215 (FTQAE). 436–440 (EPSFG) contacts substrate.

It belongs to the class-II aminoacyl-tRNA synthetase family.

It is found in the cytoplasm. The enzyme catalyses tRNA(Gly) + glycine + ATP = glycyl-tRNA(Gly) + AMP + diphosphate. In terms of biological role, catalyzes the attachment of glycine to tRNA(Gly). In Methanothermobacter thermautotrophicus (strain ATCC 29096 / DSM 1053 / JCM 10044 / NBRC 100330 / Delta H) (Methanobacterium thermoautotrophicum), this protein is Glycine--tRNA ligase.